The sequence spans 281 residues: sn-glycerol-3-phosphate transport system permease protein UgpE (281 aa).

Helical transmembrane passes span leucine 16–leucine 36, phenylalanine 85–phenylalanine 105, phenylalanine 113–valine 133, leucine 142–phenylalanine 162, alanine 202–isoleucine 222, and tryptophan 247–valine 267. One can recognise an ABC transmembrane type-1 domain in the interval leucine 77 to methionine 268.

This sequence belongs to the binding-protein-dependent transport system permease family. UgpAE subfamily. The complex is composed of two ATP-binding proteins (UgpC), two transmembrane proteins (UgpA and UgpE) and a solute-binding protein (UgpB).

The protein resides in the cell inner membrane. In terms of biological role, part of the ABC transporter complex UgpBAEC involved in sn-glycerol-3-phosphate (G3P) import. Probably responsible for the translocation of the substrate across the membrane. In Shigella dysenteriae serotype 1 (strain Sd197), this protein is sn-glycerol-3-phosphate transport system permease protein UgpE (ugpE).